A 246-amino-acid polypeptide reads, in one-letter code: Acetoacetate decarboxylase (246 aa).

The active-site Schiff-base intermediate with acetoacetate is Lys115.

The protein belongs to the ADC family.

The enzyme catalyses acetoacetate + H(+) = acetone + CO2. Functionally, catalyzes the conversion of acetoacetate to acetone and carbon dioxide. This chain is Acetoacetate decarboxylase, found in Clostridium beijerinckii (Clostridium MP).